Consider the following 255-residue polypeptide: Putative enoyl-CoA hydratase/isomerase YhaR (255 aa).

2 consecutive transmembrane segments (helical) span residues 96–116 (VTIA…ALCA) and 126–146 (VLAM…HYLL).

It belongs to the enoyl-CoA hydratase/isomerase family.

It localises to the cell membrane. This is Putative enoyl-CoA hydratase/isomerase YhaR (yhaR) from Bacillus subtilis (strain 168).